Reading from the N-terminus, the 254-residue chain is Tabinhibitin 6 (254 aa).

Residues 1 to 22 form the signal peptide; that stretch reads MLPYWCPLLLAALVLQYATIDA. A Cell attachment site motif is present at residues 31–33; that stretch reads RGD. The region spanning 66 to 210 is the SCP domain; the sequence is LSKINDVRDH…KARALLTCNF (145 aa).

The protein belongs to the CRISP family. As to expression, expressed in salivary glands.

Its subcellular location is the secreted. Inhibits platelet aggregation induced by all agonists tested (ADP, arachidonic acid, the thromboxane A2 analog U46619, thrombin, and snake venom snaclecs (TMVA that activates platelet through GPIB, and stejnulxin that specifically acts through GPVI (GP6))). May act by competing with fibrinogen for binding to glycoprotein IIb/IIIa (ITGA2B/ITGB3). The protein is Tabinhibitin 6 of Tabanus yao (Horsefly).